Consider the following 358-residue polypeptide: Sulfate/thiosulfate import ATP-binding protein CysA (358 aa).

The ABC transporter domain occupies 3-237 (IKIENLEKHF…PQTPFVTQFV (235 aa)). Residue 35–42 (GPSGCGKT) coordinates ATP.

Belongs to the ABC transporter superfamily. Sulfate/tungstate importer (TC 3.A.1.6) family. The complex is composed of two ATP-binding proteins (CysA), two transmembrane proteins (CysT and CysW) and a solute-binding protein (CysP).

It is found in the cell inner membrane. The catalysed reaction is sulfate(out) + ATP + H2O = sulfate(in) + ADP + phosphate + H(+). The enzyme catalyses thiosulfate(out) + ATP + H2O = thiosulfate(in) + ADP + phosphate + H(+). Part of the ABC transporter complex CysAWTP involved in sulfate/thiosulfate import. Responsible for energy coupling to the transport system. This chain is Sulfate/thiosulfate import ATP-binding protein CysA, found in Mannheimia succiniciproducens (strain KCTC 0769BP / MBEL55E).